A 208-amino-acid chain; its full sequence is Uracil phosphoribosyltransferase (208 aa).

5-phospho-alpha-D-ribose 1-diphosphate-binding positions include R78, R103, and 130-138; that span reads DPMLATGGS. Residues I193 and 198–200 contribute to the uracil site; that span reads GDA. D199 is a 5-phospho-alpha-D-ribose 1-diphosphate binding site.

It belongs to the UPRTase family. Mg(2+) serves as cofactor.

The catalysed reaction is UMP + diphosphate = 5-phospho-alpha-D-ribose 1-diphosphate + uracil. It functions in the pathway pyrimidine metabolism; UMP biosynthesis via salvage pathway; UMP from uracil: step 1/1. Its activity is regulated as follows. Allosterically activated by GTP. Functionally, catalyzes the conversion of uracil and 5-phospho-alpha-D-ribose 1-diphosphate (PRPP) to UMP and diphosphate. In Shewanella sediminis (strain HAW-EB3), this protein is Uracil phosphoribosyltransferase.